A 237-amino-acid chain; its full sequence is Urease accessory protein UreF (237 aa).

This sequence belongs to the UreF family. UreD, UreF and UreG form a complex that acts as a GTP-hydrolysis-dependent molecular chaperone, activating the urease apoprotein by helping to assemble the nickel containing metallocenter of UreC. The UreE protein probably delivers the nickel.

The protein resides in the cytoplasm. Functionally, required for maturation of urease via the functional incorporation of the urease nickel metallocenter. In Streptococcus salivarius (strain 57.I), this protein is Urease accessory protein UreF.